Consider the following 132-residue polypeptide: Glycine cleavage system H protein (132 aa).

Positions 24–106 constitute a Lipoyl-binding domain; that stretch reads IATIGLSAFA…YGDGWLIKVR (83 aa). An N6-lipoyllysine modification is found at Lys-65.

Belongs to the GcvH family. In terms of assembly, the glycine cleavage system is composed of four proteins: P, T, L and H. (R)-lipoate serves as cofactor.

Functionally, the glycine cleavage system catalyzes the degradation of glycine. The H protein shuttles the methylamine group of glycine from the P protein to the T protein. The sequence is that of Glycine cleavage system H protein from Rippkaea orientalis (strain PCC 8801 / RF-1) (Cyanothece sp. (strain PCC 8801)).